A 128-amino-acid chain; its full sequence is uncharacterized protein (128 aa).

One can recognise a VOC domain in the interval 2–127 (KLLQIRLLVN…DHNLIEIYKM (126 aa)). The Ni(2+) site is built by Glu-48 and Glu-123.

This sequence belongs to the glyoxalase I family.

This is an uncharacterized protein from Bacillus subtilis (strain 168).